Here is a 177-residue protein sequence, read N- to C-terminus: ATP synthase subunit delta (177 aa).

Belongs to the ATPase delta chain family. F-type ATPases have 2 components, F(1) - the catalytic core - and F(0) - the membrane proton channel. F(1) has five subunits: alpha(3), beta(3), gamma(1), delta(1), epsilon(1). F(0) has three main subunits: a(1), b(2) and c(10-14). The alpha and beta chains form an alternating ring which encloses part of the gamma chain. F(1) is attached to F(0) by a central stalk formed by the gamma and epsilon chains, while a peripheral stalk is formed by the delta and b chains.

Its subcellular location is the cell inner membrane. Functionally, f(1)F(0) ATP synthase produces ATP from ADP in the presence of a proton or sodium gradient. F-type ATPases consist of two structural domains, F(1) containing the extramembraneous catalytic core and F(0) containing the membrane proton channel, linked together by a central stalk and a peripheral stalk. During catalysis, ATP synthesis in the catalytic domain of F(1) is coupled via a rotary mechanism of the central stalk subunits to proton translocation. This protein is part of the stalk that links CF(0) to CF(1). It either transmits conformational changes from CF(0) to CF(1) or is implicated in proton conduction. This Haemophilus ducreyi (strain 35000HP / ATCC 700724) protein is ATP synthase subunit delta.